The sequence spans 362 residues: Alanine racemase (362 aa).

Lysine 33 acts as the Proton acceptor; specific for D-alanine in catalysis. An N6-(pyridoxal phosphate)lysine modification is found at lysine 33. Arginine 129 lines the substrate pocket. Tyrosine 254 (proton acceptor; specific for L-alanine) is an active-site residue. Residue methionine 302 participates in substrate binding.

This sequence belongs to the alanine racemase family. Pyridoxal 5'-phosphate is required as a cofactor.

It carries out the reaction L-alanine = D-alanine. It participates in amino-acid biosynthesis; D-alanine biosynthesis; D-alanine from L-alanine: step 1/1. In terms of biological role, catalyzes the interconversion of L-alanine and D-alanine. May also act on other amino acids. The chain is Alanine racemase (alr) from Xylella fastidiosa (strain 9a5c).